We begin with the raw amino-acid sequence, 997 residues long: uncharacterized protein (997 aa).

Belongs to the MG414/MG415 family.

This is an uncharacterized protein from Mycoplasma pneumoniae (strain ATCC 29342 / M129 / Subtype 1) (Mycoplasmoides pneumoniae).